Consider the following 187-residue polypeptide: UPF0340 protein SPN23F05980 (187 aa).

The protein belongs to the UPF0340 family.

In Streptococcus pneumoniae (strain ATCC 700669 / Spain 23F-1), this protein is UPF0340 protein SPN23F05980.